Consider the following 105-residue polypeptide: Large ribosomal subunit protein eL30 (105 aa).

This sequence belongs to the eukaryotic ribosomal protein eL30 family.

The chain is Large ribosomal subunit protein eL30 (rpl30e) from Methanococcus vannielii (strain ATCC 35089 / DSM 1224 / JCM 13029 / OCM 148 / SB).